Reading from the N-terminus, the 184-residue chain is Large ribosomal subunit protein uL5c (184 aa).

It belongs to the universal ribosomal protein uL5 family. In terms of assembly, part of the 50S ribosomal subunit; contacts the 5S rRNA.

The protein localises to the plastid. The protein resides in the chloroplast. Its function is as follows. Binds 5S rRNA, forms part of the central protuberance of the 50S subunit. The chain is Large ribosomal subunit protein uL5c (rpl5) from Ostreococcus tauri.